Here is a 100-residue protein sequence, read N- to C-terminus: MVPTSYYILLSALLFTLGVAGVLIRRNALVLFMSVELMLNSANLALVTFAMARQDIAGQIVVFFVIVVAAAEVAVGLALLVAIFRTKQTTDVDEIHSLKG.

The next 3 helical transmembrane spans lie at Thr4–Ile24, Leu29–Phe49, and Ile60–Leu80.

It belongs to the complex I subunit 4L family. NDH-1 is composed of 14 different subunits. Subunits NuoA, H, J, K, L, M, N constitute the membrane sector of the complex.

The protein resides in the cell membrane. The enzyme catalyses a quinone + NADH + 5 H(+)(in) = a quinol + NAD(+) + 4 H(+)(out). Its function is as follows. NDH-1 shuttles electrons from NADH, via FMN and iron-sulfur (Fe-S) centers, to quinones in the respiratory chain. The immediate electron acceptor for the enzyme in this species is believed to be ubiquinone. Couples the redox reaction to proton translocation (for every two electrons transferred, four hydrogen ions are translocated across the cytoplasmic membrane), and thus conserves the redox energy in a proton gradient. This is NADH-quinone oxidoreductase subunit K from Roseiflexus sp. (strain RS-1).